A 483-amino-acid polypeptide reads, in one-letter code: Protein PLASTID TRANSCRIPTIONALLY ACTIVE 14 (483 aa).

The transit peptide at 1–62 (MASSVSLQFL…TQPFPLFQSP (62 aa)) directs the protein to the chloroplast. The 246-residue stretch at 80 to 325 (YKIGYVRSVR…KGEEMTINYM (246 aa)) folds into the SET domain. Tyr324 provides a ligand contact to S-adenosyl-L-methionine.

The protein belongs to the class V-like SAM-binding methyltransferase superfamily. Component of the transcriptionally active chromosome (TAC) complexes. Interacts with PTAC12/HMR/PAP5 and PTAC7. Binds to SL1/MTERF3. In terms of tissue distribution, mostly expressed in leaves, flowers and seedlings, and, to a lower extent, in stems and roots.

The protein resides in the plastid. It is found in the chloroplast thylakoid. Essential for chloroplast development, especially for thylakoid formation. Involved in plastid gene expression, probably by maintaining plastid-encoded RNA polymerase (PEP) activity. The chain is Protein PLASTID TRANSCRIPTIONALLY ACTIVE 14 from Arabidopsis thaliana (Mouse-ear cress).